The primary structure comprises 743 residues: Isocitrate dehydrogenase [NADP] 2 (743 aa).

The NADP(+) site is built by Asn87 and Ser89. Ser134, Asn137, Arg141, Arg147, and Lys257 together coordinate D-threo-isocitrate. Position 137 (Asn137) interacts with NADP(+). Position 352 (Asp352) interacts with Mg(2+). Residues Tyr422 and Arg549 each contribute to the D-threo-isocitrate site. 2 residues coordinate Mg(2+): Asp550 and Asp554. NADP(+) contacts are provided by Ser587, His591, Arg602, Asp604, and Arg651.

This sequence belongs to the monomeric-type IDH family. As to quaternary structure, monomer. It depends on Mg(2+) as a cofactor. Mn(2+) serves as cofactor.

The enzyme catalyses D-threo-isocitrate + NADP(+) = 2-oxoglutarate + CO2 + NADPH. Catalyzes the oxidative decarboxylation of isocitrate to 2-oxoglutarate and carbon dioxide with the concomitant reduction of NADP(+). In Colwellia maris, this protein is Isocitrate dehydrogenase [NADP] 2 (icd2).